A 336-amino-acid polypeptide reads, in one-letter code: Ketol-acid reductoisomerase (NADP(+)) (336 aa).

One can recognise a KARI N-terminal Rossmann domain in the interval 1-182 (MAVIYYDKDA…GVTRAGVIET (182 aa)). NADP(+) contacts are provided by residues 25 to 28 (YGSQ), R48, S51, S53, and 83 to 86 (DEHQ). H108 is an active-site residue. G134 provides a ligand contact to NADP(+). The 146-residue stretch at 183-328 (TFKEETETDL…KELRKMMPWL (146 aa)) folds into the KARI C-terminal knotted domain. 4 residues coordinate Mg(2+): D191, E195, E227, and E231. S252 is a binding site for substrate.

The protein belongs to the ketol-acid reductoisomerase family. Mg(2+) serves as cofactor.

The enzyme catalyses (2R)-2,3-dihydroxy-3-methylbutanoate + NADP(+) = (2S)-2-acetolactate + NADPH + H(+). It carries out the reaction (2R,3R)-2,3-dihydroxy-3-methylpentanoate + NADP(+) = (S)-2-ethyl-2-hydroxy-3-oxobutanoate + NADPH + H(+). It participates in amino-acid biosynthesis; L-isoleucine biosynthesis; L-isoleucine from 2-oxobutanoate: step 2/4. Its pathway is amino-acid biosynthesis; L-valine biosynthesis; L-valine from pyruvate: step 2/4. Functionally, involved in the biosynthesis of branched-chain amino acids (BCAA). Catalyzes an alkyl-migration followed by a ketol-acid reduction of (S)-2-acetolactate (S2AL) to yield (R)-2,3-dihydroxy-isovalerate. In the isomerase reaction, S2AL is rearranged via a Mg-dependent methyl migration to produce 3-hydroxy-3-methyl-2-ketobutyrate (HMKB). In the reductase reaction, this 2-ketoacid undergoes a metal-dependent reduction by NADPH to yield (R)-2,3-dihydroxy-isovalerate. This is Ketol-acid reductoisomerase (NADP(+)) from Thermotoga maritima (strain ATCC 43589 / DSM 3109 / JCM 10099 / NBRC 100826 / MSB8).